The primary structure comprises 70 residues: Toxin Boma6d (70 aa).

The LCN-type CS-alpha/beta domain occupies 2 to 68; that stretch reads RDAYIAQNYN…VPIKVEGKCH (67 aa). Cystine bridges form between C12/C67, C16/C40, C22/C50, and C26/C52.

The protein belongs to the long (4 C-C) scorpion toxin superfamily. Sodium channel inhibitor family. Alpha subfamily. Expressed by the venom gland.

It localises to the secreted. Functionally, alpha toxins bind voltage-independently at site-3 of sodium channels (Nav) and inhibit the inactivation of the activated channels, thereby blocking neuronal transmission. In Buthus occitanus mardochei (Moroccan scorpion), this protein is Toxin Boma6d.